The chain runs to 179 residues: Large ribosomal subunit protein uL5 (179 aa).

Belongs to the universal ribosomal protein uL5 family. In terms of assembly, part of the 50S ribosomal subunit; part of the 5S rRNA/L5/L18/L25 subcomplex. Contacts the 5S rRNA and the P site tRNA. Forms a bridge to the 30S subunit in the 70S ribosome.

Its function is as follows. This is one of the proteins that bind and probably mediate the attachment of the 5S RNA into the large ribosomal subunit, where it forms part of the central protuberance. In the 70S ribosome it contacts protein S13 of the 30S subunit (bridge B1b), connecting the 2 subunits; this bridge is implicated in subunit movement. Contacts the P site tRNA; the 5S rRNA and some of its associated proteins might help stabilize positioning of ribosome-bound tRNAs. This is Large ribosomal subunit protein uL5 from Trichlorobacter lovleyi (strain ATCC BAA-1151 / DSM 17278 / SZ) (Geobacter lovleyi).